Consider the following 506-residue polypeptide: Ribose import ATP-binding protein RbsA 2 (506 aa).

ABC transporter domains follow at residues 5–241 (LRLS…VGRR) and 254–498 (ADAP…TAGT). 37–44 (GENGAGKS) serves as a coordination point for ATP.

This sequence belongs to the ABC transporter superfamily. Ribose importer (TC 3.A.1.2.1) family. In terms of assembly, the complex is composed of an ATP-binding protein (RbsA), two transmembrane proteins (RbsC) and a solute-binding protein (RbsB).

It is found in the cell inner membrane. The enzyme catalyses D-ribose(out) + ATP + H2O = D-ribose(in) + ADP + phosphate + H(+). Part of the ABC transporter complex RbsABC involved in ribose import. Responsible for energy coupling to the transport system. The chain is Ribose import ATP-binding protein RbsA 2 from Burkholderia cenocepacia (strain HI2424).